The sequence spans 228 residues: Fibrillarin-like rRNA/tRNA 2'-O-methyltransferase (228 aa).

Residues 85–86 (TT), 103–104 (EF), 128–129 (DA), and 148–151 (DVAQ) contribute to the S-adenosyl-L-methionine site.

The protein belongs to the methyltransferase superfamily. Fibrillarin family. Interacts with nop5. Component of box C/D small ribonucleoprotein (sRNP) particles that contain rpl7ae, FlpA and nop5, plus a guide RNA.

Involved in pre-rRNA and tRNA processing. Utilizes the methyl donor S-adenosyl-L-methionine to catalyze the site-specific 2'-hydroxyl methylation of ribose moieties in rRNA and tRNA. Site specificity is provided by a guide RNA that base pairs with the substrate. Methylation occurs at a characteristic distance from the sequence involved in base pairing with the guide RNA. This is Fibrillarin-like rRNA/tRNA 2'-O-methyltransferase from Methanococcus voltae.